The sequence spans 489 residues: Rhamnulokinase (489 aa).

13 to 17 (ASSGR) provides a ligand contact to ATP. Cysteines 68 and 222 form a disulfide. Substrate contacts are provided by residues glycine 83 and 236–238 (HDT). Catalysis depends on aspartate 237, which acts as the Proton acceptor. Residue threonine 259 coordinates ATP. Position 296 (asparagine 296) interacts with substrate. Glutamine 304 serves as a coordination point for ATP. Cysteine 353 and cysteine 370 are oxidised to a cystine. Residue glycine 402 coordinates ATP. An intrachain disulfide couples cysteine 413 to cysteine 417.

This sequence belongs to the rhamnulokinase family. Mg(2+) is required as a cofactor.

It carries out the reaction L-rhamnulose + ATP = L-rhamnulose 1-phosphate + ADP + H(+). It participates in carbohydrate degradation; L-rhamnose degradation; glycerone phosphate from L-rhamnose: step 2/3. Involved in the catabolism of L-rhamnose (6-deoxy-L-mannose). Catalyzes the transfer of the gamma-phosphate group from ATP to the 1-hydroxyl group of L-rhamnulose to yield L-rhamnulose 1-phosphate. This is Rhamnulokinase from Salmonella typhi.